The sequence spans 349 residues: Methylglutaconyl-CoA hydratase 1, mitochondrial (349 aa).

A mitochondrion-targeting transit peptide spans Met1–Tyr37.

This sequence belongs to the enoyl-CoA hydratase/isomerase family. As to quaternary structure, homohexamer.

The protein resides in the mitochondrion. The catalysed reaction is (3S)-3-hydroxy-3-methylglutaryl-CoA = 3-methyl-(2E)-glutaconyl-CoA + H2O. It functions in the pathway amino-acid degradation; L-leucine degradation; (S)-3-hydroxy-3-methylglutaryl-CoA from 3-isovaleryl-CoA: step 3/3. Functionally, 3-methylglutaconyl-CoA hydratase that catalyzes the fifth step in the leucine degradation pathway, the reversible hydration of 3-methylglutaconyl-CoA (3-MG-CoA) to 3-hydroxy-3-methylglutaryl-CoA (HMG-CoA). Involved in vegetative growth, conidiation and in the stress response. Controls mitochondrial morphology and mitophagy, which are critical for the infectious growth of the pathogen. The protein is Methylglutaconyl-CoA hydratase 1, mitochondrial of Pyricularia oryzae (strain 70-15 / ATCC MYA-4617 / FGSC 8958) (Rice blast fungus).